Here is a 210-residue protein sequence, read N- to C-terminus: Protein-L-isoaspartate O-methyltransferase (210 aa).

S54 is an active-site residue.

The protein belongs to the methyltransferase superfamily. L-isoaspartyl/D-aspartyl protein methyltransferase family.

The protein localises to the cytoplasm. It carries out the reaction [protein]-L-isoaspartate + S-adenosyl-L-methionine = [protein]-L-isoaspartate alpha-methyl ester + S-adenosyl-L-homocysteine. Its function is as follows. Catalyzes the methyl esterification of L-isoaspartyl residues in peptides and proteins that result from spontaneous decomposition of normal L-aspartyl and L-asparaginyl residues. It plays a role in the repair and/or degradation of damaged proteins. This is Protein-L-isoaspartate O-methyltransferase from Methanothrix thermoacetophila (strain DSM 6194 / JCM 14653 / NBRC 101360 / PT) (Methanosaeta thermophila).